We begin with the raw amino-acid sequence, 212 residues long: Protein-L-isoaspartate O-methyltransferase (212 aa).

Serine 56 is a catalytic residue.

Belongs to the methyltransferase superfamily. L-isoaspartyl/D-aspartyl protein methyltransferase family.

Its subcellular location is the cytoplasm. It carries out the reaction [protein]-L-isoaspartate + S-adenosyl-L-methionine = [protein]-L-isoaspartate alpha-methyl ester + S-adenosyl-L-homocysteine. Functionally, catalyzes the methyl esterification of L-isoaspartyl residues in peptides and proteins that result from spontaneous decomposition of normal L-aspartyl and L-asparaginyl residues. It plays a role in the repair and/or degradation of damaged proteins. In Myxococcus xanthus (strain DK1622), this protein is Protein-L-isoaspartate O-methyltransferase.